The following is a 224-amino-acid chain: Putative adhesin A1E_05320 (224 aa).

Positions 1 to 22 (MKKLLLIAATSATMLSSTLSFA) are cleaved as a signal peptide.

This is Putative adhesin A1E_05320 from Rickettsia canadensis (strain McKiel).